An 880-amino-acid chain; its full sequence is Potassium/sodium hyperpolarization-activated cyclic nucleotide-gated channel 1 (880 aa).

The tract at residues 1–80 (MEGGGKPNSS…SAGGLEDAEG (80 aa)) is disordered. Residues 1–136 (MEGGGKPNSS…WIIHSYSDFR (136 aa)) are Cytoplasmic-facing. Positions 8–34 (NSSSNSRDDGNSVFPAKAPATGAGPAA) are enriched in low complexity. Residues 62–71 (DGGGGGGEES) are compositionally biased toward gly residues. Residues 137–158 (FYWDLIMLIMMVGNLVIIPVGI) traverse the membrane as a helical segment. The Extracellular segment spans residues 159-167 (TFFTEQTTT). Residues 168–188 (PWIIFNVASDTVFLLDLIMNF) form a helical membrane-spanning segment. The Cytoplasmic portion of the chain corresponds to 189–209 (RTGTVNEDSSEIILDPKVIKM). Residues 210 to 230 (NYLKSWFVVDFISSIPVDYIF) form a helical membrane-spanning segment. The Extracellular portion of the chain corresponds to 231 to 254 (LIVEKGMDSEVYKTARALRIVRFT). The chain crosses the membrane as a helical; Voltage-sensor span at residues 255–275 (KILSLLRLLRLSRLIRYIHQW). The Cytoplasmic portion of the chain corresponds to 276–289 (EEIFHMTYDLASAV). Residues 290 to 312 (VRIFNLIGMMLLLCHWDGCLQFL) form a helical membrane-spanning segment. Residues 313-338 (VPLLQDFPPDCWVSLNEMVNDSWGKQ) are Extracellular-facing. Asn332 is a glycosylation site (N-linked (GlcNAc...) asparagine). The pore-forming intramembrane region spans 339–360 (YSYALFKAMSHMLCIGYGAQAP). A Selectivity filter motif is present at residues 352-356 (CIGYG). The Extracellular portion of the chain corresponds to 361–365 (VSMSD). Residues 366–386 (LWITMLSMIVGATCYAMFVGH) form a helical membrane-spanning segment. Residues 387–880 (ATALIQSLDS…AEKPRFASNL (494 aa)) lie on the Cytoplasmic side of the membrane. 3',5'-cyclic AMP is bound by residues Gly533, Glu534, Cys536, Arg543, Thr544, Arg584, and Arg587. The span at 641–664 (LNSTSSTATPTSRMRTQSPPVYTA) shows a compositional bias: polar residues. Disordered regions lie at residues 641–686 (LNST…QPSA), 718–786 (ASQL…LPHE), and 835–880 (MSSG…ASNL). Low complexity-rich tracts occupy residues 665-685 (TSLSHSNLHSPSPSTQTPQPS) and 725-738 (PQQQQQPQAPQTQP). The span at 760 to 770 (STQALPNTSLT) shows a compositional bias: polar residues. Over residues 844-855 (RGVPPAPPPPAA) the composition is skewed to pro residues. The span at 870–880 (EAEKPRFASNL) shows a compositional bias: basic and acidic residues.

It belongs to the potassium channel HCN family. As to quaternary structure, homotetramer. Heterotetramer with HCN2. The potassium channel is composed of a homo- or heterotetrameric complex of pore-forming subunits. Interacts with KCNE2. Interacts with the SH3 domain of CSK. As to expression, detected in myocytes in heart sinoatrial node (SAN) and in brain, in particular in the granule cell layer and in Purkinje neuron bodies in the cerebellum.

The protein localises to the cell membrane. The enzyme catalyses Na(+)(in) = Na(+)(out). It carries out the reaction K(+)(in) = K(+)(out). Activated by cAMP. cAMP binding promotes tetramerization and formation of an active channel. Compared to other family members, cAMP has less stimulatory effect on HCN1 because part of the molecules already contain bound cAMP and form homotetramers when cAMP levels are low, this inherent tetramerization in HCN1 results in a weaker response to increased cAMP. Its function is as follows. Hyperpolarization-activated ion channel that are permeable to sodium and potassium ions. Exhibits weak selectivity for potassium over sodium ions. Contributes to the native pacemaker currents in heart (If) and in neurons (Ih). Participates in cerebellar mechanisms of motor learning. May mediate responses to sour stimuli. In Oryctolagus cuniculus (Rabbit), this protein is Potassium/sodium hyperpolarization-activated cyclic nucleotide-gated channel 1 (HCN1).